Consider the following 156-residue polypeptide: Ribosomal RNA large subunit methyltransferase H (156 aa).

Residues Leu73, Gly104, and Leu123–Leu128 contribute to the S-adenosyl-L-methionine site.

It belongs to the RNA methyltransferase RlmH family. Homodimer.

The protein localises to the cytoplasm. The catalysed reaction is pseudouridine(1915) in 23S rRNA + S-adenosyl-L-methionine = N(3)-methylpseudouridine(1915) in 23S rRNA + S-adenosyl-L-homocysteine + H(+). Specifically methylates the pseudouridine at position 1915 (m3Psi1915) in 23S rRNA. The chain is Ribosomal RNA large subunit methyltransferase H from Shewanella putrefaciens (strain CN-32 / ATCC BAA-453).